A 251-amino-acid chain; its full sequence is tRNA pseudouridine synthase A (251 aa).

D52 (nucleophile) is an active-site residue. Y113 contacts substrate.

It belongs to the tRNA pseudouridine synthase TruA family. In terms of assembly, homodimer.

It carries out the reaction uridine(38/39/40) in tRNA = pseudouridine(38/39/40) in tRNA. Functionally, formation of pseudouridine at positions 38, 39 and 40 in the anticodon stem and loop of transfer RNAs. The chain is tRNA pseudouridine synthase A from Brucella anthropi (strain ATCC 49188 / DSM 6882 / CCUG 24695 / JCM 21032 / LMG 3331 / NBRC 15819 / NCTC 12168 / Alc 37) (Ochrobactrum anthropi).